Here is an 810-residue protein sequence, read N- to C-terminus: Soluble starch synthase 2-3, chloroplastic/amyloplastic (810 aa).

The N-terminal 16 residues, 1–16, are a transit peptide targeting the chloroplast; that stretch reads MSSAVVASSTTFLVAL. Disordered regions lie at residues 43–265 and 281–313; these read GRAG…PIPA and EPDA…SGPL. The span at 63–83 shows a compositional bias: basic and acidic residues; that stretch reads RDAGVVRRADDGENEAAVERA. Residues 84 to 93 are compositionally biased toward acidic residues; it reads GEDDEEEEEF. Residues 102–116 show a composition bias toward basic residues; the sequence is RSRRGGVGKVLKRRG. Positions 129-148 are enriched in low complexity; it reads DAARVRGAAAPAPAPTQDAA. The span at 281–310 shows a compositional bias: acidic residues; the sequence is EPDAAEDGDDDDDWADSDASDSEIDQDDDS. Lys-333 is an ADP-alpha-D-glucose binding site.

It belongs to the glycosyltransferase 1 family. Bacterial/plant glycogen synthase subfamily. Expressed most exclusively in endosperm.

The protein resides in the plastid. Its subcellular location is the amyloplast. It is found in the chloroplast. It carries out the reaction [(1-&gt;4)-alpha-D-glucosyl](n) + ADP-alpha-D-glucose = [(1-&gt;4)-alpha-D-glucosyl](n+1) + ADP + H(+). Its pathway is glycan biosynthesis; starch biosynthesis. Functionally, plays an important role during endosperm starch synthesis. Determines the type of amylopectin structure of starch grain. Synthesizes long B1 amylopectin chains by elongating short A and B1 chains, independently of the other soluble starch synthases. Barely active in japonica subspecies. This chain is Soluble starch synthase 2-3, chloroplastic/amyloplastic (SSII-3), found in Oryza sativa subsp. indica (Rice).